A 689-amino-acid polypeptide reads, in one-letter code: SH3 domain-binding protein 1 (689 aa).

Over residues 1–11 the composition is skewed to basic residues; sequence MMKRQLHRMRQ. The tract at residues 1–24 is disordered; that stretch reads MMKRQLHRMRQLAHTGSSGRTPET. The segment at 1–275 is interaction with CGNL1; that stretch reads MMKRQLHRMR…TAAPFSRVYG (275 aa). The 246-residue stretch at 17–262 folds into the BAR domain; it reads SSGRTPETAE…RDNHSQADSS (246 aa). Phosphoserine is present on residues serine 241 and serine 262. Residues 276-469 enclose the Rho-GAP domain; that stretch reads VSLRTHLQDL…VLIQNADTLF (194 aa). Positions 470 to 689 are interaction with CD2AP; sequence PGDINFSVSG…RPRGLISETD (220 aa). The tract at residues 507–689 is disordered; sequence TAATPTPTPA…RPRGLISETD (183 aa). Serine 539 and serine 545 each carry phosphoserine. Pro residues predominate over residues 565–575; that stretch reads PARPTMPPPQP. The span at 576 to 594 shows a compositional bias: low complexity; that stretch reads SSSRSSPPALSLPAGSVSP. Serine 586 is subject to Phosphoserine. Threonine 596 carries the phosphothreonine modification. Positions 611 to 620 match the SH3-binding motif; the sequence is APTVPPPLPP. Pro residues predominate over residues 613–625; that stretch reads TVPPPLPPAPPQP. Serine 641 bears the Phosphoserine mark. Residues 670–680 show a composition bias toward pro residues; the sequence is PPTPVLPPQPR.

In terms of assembly, interacts with RAC1. Interacts with the exocyst via EXOC4 and EXOC8; required for the localization of both SH3BP1 and the exocyst to the leading edge of migrating cells. Interacts with CD2AP and CGNL1; probably part of a complex at cell junctions. Interacts with CAPZA1; recruits CAPZA1 to forming cell junctions. May interact with AFDN. Interacts with PLXND1; they dissociate upon SEMA3E binding to PLXND1 allowing SH3BP1 to transduce downstream signal through RAC1 inactivation. Interacts with ABL1, GRB2 and SRC (via SH3 domain).

Its subcellular location is the cell projection. It localises to the cell junction. It is found in the tight junction. The protein resides in the adherens junction. The protein localises to the phagocytic cup. Its subcellular location is the nucleus. It localises to the cytoplasm. It is found in the cytosol. Its function is as follows. GTPase activating protein/GAP which specifically converts GTP-bound Rho-type GTPases including RAC1 and CDC42 in their inactive GDP-bound form. By specifically inactivating RAC1 at the leading edge of migrating cells, it regulates the spatiotemporal organization of cell protrusions which is important for proper cell migration. Also negatively regulates CDC42 in the process of actin remodeling and the formation of epithelial cell junctions. Through its GAP activity toward RAC1 and/or CDC42 plays a specific role in phagocytosis of large particles. Specifically recruited by a PI3 kinase/PI3K-dependent mechanism to sites of large particles engagement, inactivates RAC1 and/or CDC42 allowing the reorganization of the underlying actin cytoskeleton required for engulfment. It also plays a role in angiogenesis and the process of repulsive guidance as part of a semaphorin-plexin signaling pathway. Following the binding of PLXND1 to extracellular SEMA3E it dissociates from PLXND1 and inactivates RAC1, inducing the intracellular reorganization of the actin cytoskeleton and the collapse of cells. This Rattus norvegicus (Rat) protein is SH3 domain-binding protein 1.